We begin with the raw amino-acid sequence, 365 residues long: Chloroplast protein FOR GROWTH AND FERTILITY 1 (365 aa).

Disordered stretches follow at residues 1–30 (MERLLQPSSSSSSISPSKFPSRTSPFLPRL) and 62–90 (YTPIGSNTTNNSFNGSPKSDESKPNPGFL). The N-terminal 79 residues, 1–79 (MERLLQPSSS…TNNSFNGSPK (79 aa)), are a transit peptide targeting the chloroplast. Low complexity-rich tracts occupy residues 7-24 (PSSSSSSISPSKFPSRTS) and 62-77 (YTPIGSNTTNNSFNGS). Transmembrane regions (helical) follow at residues 109-129 (VILISAVAVLLLNPLLAPPAF), 139-159 (GWLTSAWTGFLAGCLHTLSGP), 182-202 (ALWGCGHDAGQVIFGLLFLLL), 218-238 (IVGLTLVIIGAMGIKEASEIP), 274-294 (GVVHGLQPDALMIVLPALALP), 301-321 (AFLIMFLVGTVIAMGSYTAFI), and 345-365 (LVAIGLGLGIVISPFFGFSLY).

Mostly expressed in leaves and flowers, to a lower extent, in stems, roots, floral bud, inflorescence and siliques, and, barely, in seedlings.

The protein localises to the plastid. It is found in the chloroplast membrane. It localises to the plastid membrane. Together with CGF2, essential protein which supports female gametogenesis and embryogenesis, probably by securing local energy supply. The protein is Chloroplast protein FOR GROWTH AND FERTILITY 1 of Arabidopsis thaliana (Mouse-ear cress).